The sequence spans 501 residues: Probable cytosol aminopeptidase (501 aa).

Mn(2+) contacts are provided by Lys-268 and Asp-273. Lys-280 is an active-site residue. 3 residues coordinate Mn(2+): Asp-291, Asp-350, and Glu-352. Arg-354 is a catalytic residue.

It belongs to the peptidase M17 family. The cofactor is Mn(2+).

It localises to the cytoplasm. The enzyme catalyses Release of an N-terminal amino acid, Xaa-|-Yaa-, in which Xaa is preferably Leu, but may be other amino acids including Pro although not Arg or Lys, and Yaa may be Pro. Amino acid amides and methyl esters are also readily hydrolyzed, but rates on arylamides are exceedingly low.. It catalyses the reaction Release of an N-terminal amino acid, preferentially leucine, but not glutamic or aspartic acids.. Its function is as follows. Presumably involved in the processing and regular turnover of intracellular proteins. Catalyzes the removal of unsubstituted N-terminal amino acids from various peptides. The sequence is that of Probable cytosol aminopeptidase from Nitrosococcus oceani (strain ATCC 19707 / BCRC 17464 / JCM 30415 / NCIMB 11848 / C-107).